Reading from the N-terminus, the 1450-residue chain is DNA-directed RNA polymerase III subunit rpc1 (1450 aa).

Cysteine 67, cysteine 70, cysteine 77, histidine 80, cysteine 107, cysteine 110, and cysteine 154 together coordinate Zn(2+). Residues aspartate 491, aspartate 493, and aspartate 495 each coordinate Mg(2+). Residues 832–844 (PTEFFFHTMGGRE) are bridging helix.

This sequence belongs to the RNA polymerase beta' chain family. As to quaternary structure, component of the RNA polymerase III (Pol III) complex consisting of 17 subunits.

The protein localises to the nucleus. The catalysed reaction is RNA(n) + a ribonucleoside 5'-triphosphate = RNA(n+1) + diphosphate. Its function is as follows. DNA-dependent RNA polymerase catalyzes the transcription of DNA into RNA using the four ribonucleoside triphosphates as substrates. Largest and catalytic core component of RNA polymerase III which synthesizes small RNAs, such as 5S rRNA and tRNAs. Forms the polymerase active center together with the second largest subunit. A single-stranded DNA template strand of the promoter is positioned within the central active site cleft of Pol III. A bridging helix emanates from RPC1 and crosses the cleft near the catalytic site and is thought to promote translocation of Pol III by acting as a ratchet that moves the RNA-DNA hybrid through the active site by switching from straight to bent conformations at each step of nucleotide addition. The polypeptide is DNA-directed RNA polymerase III subunit rpc1 (polr3a) (Dictyostelium discoideum (Social amoeba)).